The primary structure comprises 413 residues: Histidine--tRNA ligase (413 aa).

It belongs to the class-II aminoacyl-tRNA synthetase family. In terms of assembly, homodimer.

It is found in the cytoplasm. It catalyses the reaction tRNA(His) + L-histidine + ATP = L-histidyl-tRNA(His) + AMP + diphosphate + H(+). This is Histidine--tRNA ligase from Ehrlichia canis (strain Jake).